We begin with the raw amino-acid sequence, 268 residues long: Helix-loop-helix protein 6 (268 aa).

Over residues Gln-117 to Pro-130 the composition is skewed to low complexity. The segment at Gln-117–Thr-140 is disordered. Positions Lys-131–Thr-140 are enriched in polar residues. In terms of domain architecture, bHLH spans Ser-173–Leu-225.

As to expression, expressed in the gland cells of the pharynx and weakly in the pharyngeal neuron.

It localises to the nucleus. Functionally, transcription factor that regulates the development of the g2 pharyngeal gland cells and pharyngeal gland function and thereby is required for feeding. Required for the expression of a number of genes in the pharyngeal gland, possibly by binding to the E box motif (5'-CANNTG-3') in the promoter region of these genes. Positively regulates the expression of genes encoding mucin-like proteins, which lubricate the pharyngeal tract to ensure efficient passage of the bacterial food source. Exhibits pharyngeal gland-specific positive autoregulation activity. This is Helix-loop-helix protein 6 (hlh-6) from Caenorhabditis elegans.